A 156-amino-acid polypeptide reads, in one-letter code: ATP synthase subunit b (156 aa).

The helical transmembrane segment at 11 to 31 threads the bilayer; the sequence is AIAFVLFVLFCMKYVWPPLMA.

Belongs to the ATPase B chain family. In terms of assembly, F-type ATPases have 2 components, F(1) - the catalytic core - and F(0) - the membrane proton channel. F(1) has five subunits: alpha(3), beta(3), gamma(1), delta(1), epsilon(1). F(0) has three main subunits: a(1), b(2) and c(10-14). The alpha and beta chains form an alternating ring which encloses part of the gamma chain. F(1) is attached to F(0) by a central stalk formed by the gamma and epsilon chains, while a peripheral stalk is formed by the delta and b chains.

It localises to the cell inner membrane. Its function is as follows. F(1)F(0) ATP synthase produces ATP from ADP in the presence of a proton or sodium gradient. F-type ATPases consist of two structural domains, F(1) containing the extramembraneous catalytic core and F(0) containing the membrane proton channel, linked together by a central stalk and a peripheral stalk. During catalysis, ATP synthesis in the catalytic domain of F(1) is coupled via a rotary mechanism of the central stalk subunits to proton translocation. Functionally, component of the F(0) channel, it forms part of the peripheral stalk, linking F(1) to F(0). This Shigella boydii serotype 18 (strain CDC 3083-94 / BS512) protein is ATP synthase subunit b.